A 417-amino-acid polypeptide reads, in one-letter code: Gamma-glutamyl phosphate reductase (417 aa).

It belongs to the gamma-glutamyl phosphate reductase family.

Its subcellular location is the cytoplasm. The enzyme catalyses L-glutamate 5-semialdehyde + phosphate + NADP(+) = L-glutamyl 5-phosphate + NADPH + H(+). Its pathway is amino-acid biosynthesis; L-proline biosynthesis; L-glutamate 5-semialdehyde from L-glutamate: step 2/2. Its function is as follows. Catalyzes the NADPH-dependent reduction of L-glutamate 5-phosphate into L-glutamate 5-semialdehyde and phosphate. The product spontaneously undergoes cyclization to form 1-pyrroline-5-carboxylate. This is Gamma-glutamyl phosphate reductase from Meiothermus ruber.